We begin with the raw amino-acid sequence, 317 residues long: Acetyl-coenzyme A carboxylase carboxyl transferase subunit alpha (317 aa).

Positions 40–293 (LEKRSADALK…GDIIAASLRS (254 aa)) constitute a CoA carboxyltransferase C-terminal domain.

It belongs to the AccA family. As to quaternary structure, acetyl-CoA carboxylase is a heterohexamer composed of biotin carboxyl carrier protein (AccB), biotin carboxylase (AccC) and two subunits each of ACCase subunit alpha (AccA) and ACCase subunit beta (AccD).

It localises to the cytoplasm. It catalyses the reaction N(6)-carboxybiotinyl-L-lysyl-[protein] + acetyl-CoA = N(6)-biotinyl-L-lysyl-[protein] + malonyl-CoA. Its pathway is lipid metabolism; malonyl-CoA biosynthesis; malonyl-CoA from acetyl-CoA: step 1/1. Functionally, component of the acetyl coenzyme A carboxylase (ACC) complex. First, biotin carboxylase catalyzes the carboxylation of biotin on its carrier protein (BCCP) and then the CO(2) group is transferred by the carboxyltransferase to acetyl-CoA to form malonyl-CoA. This is Acetyl-coenzyme A carboxylase carboxyl transferase subunit alpha from Brucella canis (strain ATCC 23365 / NCTC 10854 / RM-666).